Consider the following 962-residue polypeptide: Thrombospondin-3a (962 aa).

An N-terminal signal peptide occupies residues methionine 1–serine 23. The 173-residue stretch at aspartate 24 to glycine 196 folds into the Laminin G-like domain. Residues proline 277–glutamine 318 enclose the EGF-like 1 domain. Intrachain disulfides connect cysteine 281–cysteine 292, cysteine 286–cysteine 303, cysteine 306–cysteine 317, cysteine 323–cysteine 335, cysteine 329–cysteine 344, cysteine 347–cysteine 371, cysteine 377–cysteine 390, cysteine 384–cysteine 399, cysteine 402–cysteine 414, cysteine 420–cysteine 434, cysteine 428–cysteine 444, cysteine 446–cysteine 457, cysteine 473–cysteine 480, cysteine 485–cysteine 505, cysteine 521–cysteine 541, cysteine 544–cysteine 564, cysteine 580–cysteine 600, cysteine 603–cysteine 623, cysteine 641–cysteine 661, and cysteine 684–cysteine 704. The N-linked (GlcNAc...) asparagine glycan is linked to asparagine 313. Residues aspartate 319–glycine 358 form the EGF-like 2; calcium-binding domain. The EGF-like 3; calcium-binding domain occupies aspartate 373–alanine 412. N-linked (GlcNAc...) asparagine glycosylation occurs at asparagine 409. The 43-residue stretch at proline 416–glycine 458 folds into the EGF-like 4 domain. TSP type-3 repeat units lie at residues lysine 459–glutamine 493, glutamate 494–glutamine 529, glutamine 530–glutamine 552, lysine 553–glutamine 588, threonine 589–glutamine 611, threonine 612–glutamine 649, leucine 650–glutamine 692, and lysine 693–leucine 728. The interval proline 548–cysteine 704 is disordered. The segment covering serine 557 to glycine 570 has biased composition (acidic residues). Residues glycine 631–cysteine 641 are compositionally biased toward basic and acidic residues. Asparagine 646 is a glycosylation site (N-linked (GlcNAc...) asparagine). The segment covering serine 652–glycine 669 has biased composition (acidic residues). The N-linked (GlcNAc...) asparagine glycan is linked to asparagine 710. Cysteine 720 and cysteine 941 are oxidised to a cystine. Positions arginine 732–proline 946 constitute a TSP C-terminal domain. Asparagine 942 carries an N-linked (GlcNAc...) asparagine glycan.

It belongs to the thrombospondin family. As to quaternary structure, oligomer; disulfide-linked.

Adhesive glycoprotein that mediates cell-to-cell and cell-to-matrix interactions. Can bind to fibrinogen, fibronectin, laminin and type V collagen. This Danio rerio (Zebrafish) protein is Thrombospondin-3a (thbs3a).